A 30-amino-acid polypeptide reads, in one-letter code: Dermaseptin-DI4 (30 aa).

As to expression, expressed by the skin glands.

Its subcellular location is the secreted. Its function is as follows. Antibacterial activity against Gram-positive bacteria S.aureus and E.faecalis, and Gram-negative bacteria P.aeruginosa and E.coli. In Phyllomedusa distincta (Monkey frog), this protein is Dermaseptin-DI4.